The following is a 77-amino-acid chain: Large ribosomal subunit protein bL31 (77 aa).

Zn(2+) is bound by residues Cys-16, Cys-18, Cys-37, and Cys-40.

This sequence belongs to the bacterial ribosomal protein bL31 family. Type A subfamily. As to quaternary structure, part of the 50S ribosomal subunit. It depends on Zn(2+) as a cofactor.

Its function is as follows. Binds the 23S rRNA. The polypeptide is Large ribosomal subunit protein bL31 (Pseudomonas fluorescens (strain SBW25)).